The sequence spans 381 residues: Cytochrome b (381 aa).

4 helical membrane passes run 34-54 (FGSLLGLCLIMQIITGLFLAM), 78-99 (WLMRNIHAYGASFFFICIYLHI), 114-134 (WNIGVVLLFLLMATAFVGYVL), and 179-199 (FFAFHFLLPFLILALSVIHIL). Heme b is bound by residues His-84 and His-98. Heme b contacts are provided by His-183 and His-197. An a ubiquinone-binding site is contributed by His-202. A run of 4 helical transmembrane segments spans residues 227–247 (YKDLFGFLIVITLLATLALFM), 289–309 (LGGVLALLFSIFILLLVPLLH), 321–341 (LTQIFFWSLVTNAIILTWIGG), and 348–368 (FIMVGQIASVAYFSLFLFVIP).

Belongs to the cytochrome b family. As to quaternary structure, the cytochrome bc1 complex contains 3 respiratory subunits (MT-CYB, CYC1 and UQCRFS1), 2 core proteins (UQCRC1 and UQCRC2) and probably 6 low-molecular weight proteins. Heme b serves as cofactor.

Its subcellular location is the mitochondrion inner membrane. Component of the ubiquinol-cytochrome c reductase complex (complex III or cytochrome b-c1 complex) that is part of the mitochondrial respiratory chain. The b-c1 complex mediates electron transfer from ubiquinol to cytochrome c. Contributes to the generation of a proton gradient across the mitochondrial membrane that is then used for ATP synthesis. This Scyliorhinus canicula (Small-spotted catshark) protein is Cytochrome b (mt-cyb).